Here is a 7182-residue protein sequence, read N- to C-terminus: Replicase polyprotein 1ab (7182 aa).

The CoV Nsp1 globular domain maps to 25-151 (RTDHVSLKAS…EFQFLLRKKG (127 aa)). The region spanning 159 to 195 (DAPWDYNWTPYSDLMDALEADPCGKYSQSLLKKLVGG) is the BetaCoV Nsp1 C-terminal domain. Positions 197–473 (FTPIDQYMCG…WSKVCETANL (277 aa)) constitute a CoV Nsp2 N-terminal domain. Residues Cys340, Cys343, Cys359, and Cys361 each coordinate Zn(2+). Residues 340 to 361 (CTSCGKGSWLTGNAVQGFACDC) are C4. The region spanning 479 to 713 (QHAINFVNEF…MHILSKAMQL (235 aa)) is the CoV Nsp2 middle domain. The CoV Nsp2 C-terminal domain occupies 715–851 (HTTVSWAGSK…VPTLFRLKGG (137 aa)). A Ubiquitin-like 1 domain is found at 855–964 (KGVKFGGEQT…MTFSVNPVEE (110 aa)). Macro domains follow at residues 1186 to 1345 (PLKN…KVYN) and 1354 to 1480 (TGLT…AVQT). Residues 1480-1553 (TPEQSFINTV…LEKCRTYLTS (74 aa)) form the DPUP domain. Positions 1558-1613 (QKNVDVLVTIDGVNFRTVVLNNTTTYRVQLGSVFYKGSDISDTIPTEKMSGEAVYL) constitute a Ubiquitin-like 2 domain. In terms of domain architecture, Peptidase C16 spans 1628–1902 (VYGTADTAFL…WADVDPDLSA (275 aa)). The active-site For PL-PRO activity is the Cys1668. 4 residues coordinate Zn(2+): Cys1748, Cys1751, Cys1783, and Cys1785. The C4-type zinc-finger motif lies at 1748–1785 (CNVCGVQDTTTTGLKACIYVGMNSLDELHATHEECCQC). Residues His1838 and Asp1853 each act as for PL-PRO activity in the active site. The region spanning 1916 to 2033 (VIEYSPATIL…QVYDIAPVTL (118 aa)) is the Nucleic acid-binding domain. Positions 2059–2179 (PQSPVQVAED…ASVTVNVTTA (121 aa)) constitute a G2M domain. 3 helical membrane-spanning segments follow: residues 2158-2178 (ILLGASSLFAQFASVTVNVTT), 2196-2216 (GIIGQGFALLKMLLILPFTFW), and 2268-2288 (LLFLICTTGLLLSSLYYLFLF). The segment at 2158 to 2441 (ILLGASSLFA…VTHIPLLGLV (284 aa)) is HD1. A 3Ecto domain is found at 2305-2371 (LATYRELRSY…FQMIQTHVTS (67 aa)). 2 cysteine pairs are disulfide-bonded: Cys2321–Cys2349 and Cys2339–Cys2346. 3 helical membrane-spanning segments follow: residues 2372-2392 (YVINIDWVWFVMEFALAYVLY), 2396-2416 (FNVLLLVVSSQYFFSYTGAFV), and 2421-2441 (YNYLVSGYFFCVTHIPLLGLV). Residues 2455–2545 (RFYNHVINGC…SLRRLVKPTD (91 aa)) are Y1. The 374-residue stretch at 2455-2828 (RFYNHVINGC…LSVKFSATKL (374 aa)) folds into the CoV Nsp3 Y domain. 8 residues coordinate Zn(2+): His2459, Cys2464, Cys2469, Cys2472, Cys2505, His2508, Cys2512, and Cys2515. Residues 2459–2472 (HVINGCKDTACLLC) form a ZF1 region. A ZF2 region spans residues 2505 to 2515 (CCRHNWNCVDC). Positions 2546–2644 (KSHYYVESVT…LVDSNMVTTV (99 aa)) are Y2. The segment at 2546–2828 (KSHYYVESVT…LSVKFSATKL (283 aa)) is coV-Y. The tract at residues 2645–2727 (GDSREIASKM…DALQYAYKHD (83 aa)) is Y3. Residues 2728–2828 (LQLTTEGFNN…LSVKFSATKL (101 aa)) are Y4. The next 4 helical transmembrane spans lie at 2848 to 2868 (CVVTLVVFAMAVLSYLCLPAF), 3119 to 3139 (STSLALGVMLCIFLTIAFYYV), 3152 to 3172 (CAVVAVAAALLNSLCLCFVVS), and 3203 to 3223 (WFVMFGTVVPIWMVFAYIVGV). Residues 2848–3223 (CVVTLVVFAM…WMVFAYIVGV (376 aa)) form an HD2 region. The Nsp4C domain maps to 3242–3338 (VFTDGKLNCS…NCSVTSSVLQ (97 aa)). Residues 3339–3644 (SGLVKMAAPS…NMQVMGVVMQ (306 aa)) enclose the Peptidase C30 domain. Residues His3379 and Cys3486 each act as for 3CL-PRO activity in the active site. Transmembrane regions (helical) follow at residues 3650–3670 (ISYGLVHWLFTTLLLAYVATL), 3684–3704 (VIPLQLTPLVLCVMACVMLTV), 3709–3729 (TFLTLFLLPTAICLTYANIVY), 3760–3777 (LGVYLSLCFALAVVVRRL), 3782–3802 (ASNLALALGSAMVWFYTYTTG), 3823–3843 (VTVFLAVNVAKFFARVVFLYA), and 3855–3875 (LVLLMYLAVGYFCTVYFGVFS). The tract at residues 3650–3875 (ISYGLVHWLF…FCTVYFGVFS (226 aa)) is HD3. A RdRp Nsp7 cofactor domain is found at 3937 to 4019 (SKLTDLKCTS…DLLDHPSVLQ (83 aa)). A RdRp Nsp8 cofactor domain is found at 4020 to 4218 (ATLSEFSHLA…RAASSAVTLQ (199 aa)). The region spanning 4219 to 4328 (NNEIRPSGLK…GHIAATVRLQ (110 aa)) is the Nsp9 ssRNA-binding domain. The 139-residue stretch at 4329 to 4467 (AGSNTEFAIN…DALRGTTIPQ (139 aa)) folds into the ExoN/MTase coactivator domain. Residues Cys4402, Cys4405, His4411, Cys4418, Cys4444, Cys4447, Cys4455, and Cys4457 each coordinate Zn(2+). Zinc fingers lie at residues 4402–4418 (CLYCRAHIEHPDVTGVC) and 4444–4457 (CNVCQFWIGHGCNC). A NiRAN domain is found at 4473-4730 (FLNRVRGSIV…AAETHRDCDL (258 aa)). The Mn(2+) site is built by Asn4678 and Asp4687. Residues 4735 to 4833 (IEWPLLEYDY…MNMDVSLHRH (99 aa)) form the Nsp12 Interface domain. Zn(2+)-binding residues include His4764, Cys4770, Cys4775, Cys4779, and Cys4956. A Nsp12 RNA-dependent RNA polymerase domain is found at 4834–5401 (RLSLKELMMY…DLYTAPTTLQ (568 aa)). The interval 4836 to 5050 (SLKELMMYAA…HQKMLKSMAA (215 aa)) is rdRp Fingers N-ter. The interval 5051 to 5089 (TRGSTCVIGTTKFYGGWDFMLKTLYKDVDNPHLMGWDYP) is rdRp Palm N-ter. The region spanning 5081 to 5243 (PHLMGWDYPK…CYNSDYATKG (163 aa)) is the RdRp catalytic domain. The tract at residues 5090–5148 (KCDRAMPNMCRIFASLILARKHSTCCTNTDRFYRLANECAQVLSEYVLCGGGYYVKPGG) is rdRp Fingers C-ter. Residues His5111, Cys5114, and Cys5115 each contribute to the Zn(2+) site. Positions 5149 to 5284 (TSSGDATTAY…KKGPHEFCSQ (136 aa)) are rdRp Palm C-ter. Residues Ser5228, Asp5229, and Asp5230 contribute to the active site. Residues 5285–5401 (HTLFIKDGDD…DLYTAPTTLQ (117 aa)) are rdRp Thumb. The CV ZBD domain maps to 5402–5514 (AVGSCVVCHS…TEFNRLATCD (113 aa)). Zn(2+) is bound by residues Cys5406, Cys5409, Cys5417, Cys5420, Cys5427, Cys5430, His5434, His5440, Cys5451, Cys5456, Cys5473, and His5476. Residues 5658 to 5839 (TVPEEFANHV…MCNLGPDIFL (182 aa)) enclose the (+)RNA virus helicase ATP-binding domain. 5683-5690 (GPPGTGKS) provides a ligand contact to ATP. Residues 5840-6014 (SVCYRCPEEI…GLYKDCSRES (175 aa)) form the (+)RNA virus helicase C-terminal domain. An ExoN domain is found at 6071-6286 (LFITRDEAIR…RCLAIHDCFI (216 aa)). Active-site residues include Asp6089, Glu6091, and Glu6190. Residues Cys6206, Cys6209, Cys6225, His6228, His6256, Cys6260, and His6263 each contribute to the Zn(2+) site. Catalysis depends on residues His6267 and Asp6272. A Zn(2+)-binding site is contributed by Cys6278. The N7-MTase domain maps to 6295-6523 (YPYISHEKRL…NLWSTFTKIQ (229 aa)). 6330–6336 (DIGNPKG) serves as a coordination point for S-adenosyl-L-methionine. Residues 6409-6423 (CDGGSLYVNKHAFHT) are gpppA-binding. Zn(2+)-binding residues include Cys6447, Cys6469, Cys6480, and His6483. The region spanning 6524–6584 (GLENIAYNVI…NIAFELYAKR (61 aa)) is the Nsp15 N-terminal oligomerization domain. An AV-Nsp11N/CoV-Nsp15M domain is found at 6585–6715 (AVRSHPDFNL…IYKKVNNEFV (131 aa)). Residues 6732–6871 (TPVSEMEKDF…KDGQVQTFYP (140 aa)) enclose the NendoU domain. Catalysis depends on residues His6762, His6777, Lys6817, Lys6920, Asp7004, Lys7044, and Glu7077. Residues 6876-7170 (INDWKPGLAM…TLSVSTDVLV (295 aa)) form the Nidovirus-type SAM-dependent 2'-O-MTase domain.

It belongs to the coronaviruses polyprotein 1ab family. In terms of assembly, interacts with host PHB and PHB2. As to quaternary structure, interacts with papain-like protease nsp3 and non-structural protein 6. Monomer. Homodimer. Only the homodimer shows catalytic activity. In terms of assembly, interacts with nsp8 and nsp12 to form the replication-transcription complex (RTC): nsp12, nsp7, two subunits of nsp8, and up to two subunits of nsp13. As to quaternary structure, interacts with nsp7, nsp13 and nsp12 to form the replication-transcription complex (RTC): nsp12, nsp7, two subunits of nsp8, and up to two subunits of nsp13. Interacts with nsp12. In terms of assembly, interacts with proofreading exoribonuclease nsp14 and 2'-O-methyltransferase nsp16; these interactions enhance nsp14 and nsp16 enzymatic activities. As to quaternary structure, interacts with nsp7 and nsp8 to form the replication-transcription complex (RTC): nsp12, nsp7, two subunits of nsp8, and up to two subunits of nsp13. Interacts with nsp9. Interacts with nsp8 to form the replication-transcription complex (RTC): nsp12, nsp7, two subunits of nsp8, and up to two subunits of nsp13. Requires Mn(2+) as cofactor. The cofactor is Mg(2+). In terms of processing, specific enzymatic cleavages in vivo by its own proteases yield mature proteins. 3CL-PRO and PL-PRO proteinases are autocatalytically processed.

It localises to the host membrane. It is found in the host cytoplasm. Its subcellular location is the host perinuclear region. The protein localises to the host endoplasmic reticulum-Golgi intermediate compartment. It catalyses the reaction RNA(n) + a ribonucleoside 5'-triphosphate = RNA(n+1) + diphosphate. It carries out the reaction ATP + H2O = ADP + phosphate + H(+). The catalysed reaction is Thiol-dependent hydrolysis of ester, thioester, amide, peptide and isopeptide bonds formed by the C-terminal Gly of ubiquitin (a 76-residue protein attached to proteins as an intracellular targeting signal).. The enzyme catalyses a 5'-end (N(7)-methyl 5'-triphosphoguanosine)-ribonucleoside in mRNA + S-adenosyl-L-methionine = a 5'-end (N(7)-methyl 5'-triphosphoguanosine)-(2'-O-methyl-ribonucleoside) in mRNA + S-adenosyl-L-homocysteine + H(+). It catalyses the reaction uridylyl-uridylyl-ribonucleotide-RNA = a 3'-end uridylyl-2',3'-cyclophospho-uridine-RNA + a 5'-end dephospho-ribonucleoside-RNA. It carries out the reaction a 5'-end diphospho-ribonucleoside in mRNA + GTP + H(+) = a 5'-end (5'-triphosphoguanosine)-ribonucleoside in mRNA + diphosphate. The catalysed reaction is a 5'-end (5'-triphosphoguanosine)-ribonucleoside in mRNA + S-adenosyl-L-methionine = a 5'-end (N(7)-methyl 5'-triphosphoguanosine)-ribonucleoside in mRNA + S-adenosyl-L-homocysteine. Functionally, the replicase polyprotein of coronaviruses is a multifunctional protein: it contains the activities necessary for the transcription of negative stranded RNA, leader RNA, subgenomic mRNAs and progeny virion RNA as well as proteinases responsible for the cleavage of the polyprotein into functional products. Its function is as follows. Inhibits host translation by interacting with the 40S ribosomal subunit. The nsp1-40S ribosome complex further induces an endonucleolytic cleavage near the 5'UTR of host mRNAs, targeting them for degradation. Viral mRNAs are not susceptible to nsp1-mediated endonucleolytic RNA cleavage thanks to the presence of a 5'-end leader sequence and are therefore protected from degradation. By suppressing host gene expression, nsp1 facilitates efficient viral gene expression in infected cells and evasion from host immune response. In terms of biological role, may play a role in the modulation of host cell survival signaling pathway by interacting with host PHB and PHB2. Indeed, these two proteins play a role in maintaining the functional integrity of the mitochondria and protecting cells from various stresses. Responsible for the cleavages located at the N-terminus of the replicase polyprotein. In addition, PL-PRO possesses a deubiquitinating/deISGylating activity and processes both 'Lys-48'- and 'Lys-63'-linked polyubiquitin chains from cellular substrates. Participates together with nsp4 in the assembly of virally-induced cytoplasmic double-membrane vesicles necessary for viral replication. Antagonizes innate immune induction of type I interferon by blocking the phosphorylation, dimerization and subsequent nuclear translocation of host IRF3. Also prevents host NF-kappa-B signaling. Functionally, participates in the assembly of virally-induced cytoplasmic double-membrane vesicles necessary for viral replication. Its function is as follows. Cleaves the C-terminus of replicase polyprotein at 11 sites. Recognizes substrates containing the core sequence [ILMVF]-Q-|-[SGACN]. Also able to bind an ADP-ribose-1''-phosphate (ADRP). In terms of biological role, plays a role in the initial induction of autophagosomes from host endoplasmic reticulum. Later, limits the expansion of these phagosomes that are no longer able to deliver viral components to lysosomes. Forms a hexadecamer with nsp8 (8 subunits of each) that may participate in viral replication by acting as a primase. Alternatively, may synthesize substantially longer products than oligonucleotide primers. Functionally, forms a hexadecamer with nsp7 (8 subunits of each) that may participate in viral replication by acting as a primase. Alternatively, may synthesize substantially longer products than oligonucleotide primers. Its function is as follows. Forms a primer, NSP9-pU, which is utilized by the polymerase for the initiation of RNA chains. Interacts with ribosome signal recognition particle RNA (SRP). Together with NSP8, suppress protein integration into the cell membrane, thereby disrupting host immune defenses. In terms of biological role, plays a pivotal role in viral transcription by stimulating both nsp14 3'-5' exoribonuclease and nsp16 2'-O-methyltransferase activities. Therefore plays an essential role in viral mRNAs cap methylation. RNA-directed RNA polymerase that catalyzes the transcription of viral genomic and subgenomic RNAs. Acts in complex with nsp7 and nsp8 to transcribe both the minus and positive strands of genomic RNA. The kinase-like NiRAN domain of NSP12 attaches one or more nucleotides to the amino terminus of NSP9, forming a covalent RNA-protein intermediate that serves as transcription/replication primer. Subgenomic RNAs (sgRNAs) are formed by discontinuous transcription: The polymerase has the ability to pause at transcription-regulating sequences (TRS) and jump to the leader TRS, resulting in a major deletion. This creates a series of subgenomic RNAs that are replicated, transcribed and translated. In addition, Nsp12 is a subunit of the viral RNA capping enzyme that catalyzes the RNA guanylyltransferase reaction for genomic and sub-genomic RNAs. Subsequently, the NiRAN domain transfers RNA to GDP, and forms the core cap structure GpppA-RNA. Functionally, multi-functional protein with a zinc-binding domain in N-terminus displaying RNA and DNA duplex-unwinding activities with 5' to 3' polarity. Activity of helicase is dependent on magnesium. Its function is as follows. Plays a role in viral RNA synthesis through two distinct activities. The N7-guanine methyltransferase activity plays a role in the formation of the cap structure GpppA-RNA. The proofreading exoribonuclease reduces the sensitivity of the virus to RNA mutagens during replication. This activity acts on both ssRNA and dsRNA in a 3'-5' direction. In terms of biological role, plays a role in viral transcription/replication and prevents the simultaneous activation of host cell dsRNA sensors, such as MDA5/IFIH1, OAS, and PKR. Acts by degrading the 5'-polyuridines generated during replication of the poly(A) region of viral genomic and subgenomic RNAs. Catalyzes a two-step reaction in which a 2'3'-cyclic phosphate (2'3'-cP) is first generated by 2'-O transesterification, which is then hydrolyzed to a 3'-phosphate (3'-P). If not degraded, poly(U) RNA would hybridize with poly(A) RNA tails and activate host dsRNA sensors. Methyltransferase that mediates mRNA cap 2'-O-ribose methylation to the 5'-cap structure of viral mRNAs. N7-methyl guanosine cap is a prerequisite for binding of nsp16. Therefore plays an essential role in viral mRNAs cap methylation which is essential to evade immune system. The chain is Replicase polyprotein 1ab (rep) from Pipistrellus abramus (Japanese pipistrelle).